Consider the following 312-residue polypeptide: MSAFSEAALEKKLSELSNSQQSVQTLSLWLIHHRKHSRPIVTVWERELRKAKPNRKLTFLYLANDVIQNSKRKGPEFTKDFAPVIVEAFKHVSSETDESCKKHLGRVLSIWEERSVYENDVLEQLKHALYGDKKARKRTYEQIKVDENENCSSLGSPSEPPQTLDLVRALQDLENAASGDAAVHQRIASLPVEVQEVSLLEKITDKESGERLSKMVEDACMLLADYNGRLAAEIDDRKQLTRMLADFLRCQKEALAEKEHKLEEYKRKLARVSLVRKELRARIQSLPDLSRLPNVTGSHMHLPFAGDIYSED.

S2 carries the N-acetylserine modification. The 132-residue stretch at 2–133 folds into the CID domain; the sequence is SAFSEAALEK…QLKHALYGDK (132 aa). 3 positions are modified to phosphoserine: S153, S156, and S285. The stretch at 244–286 forms a coiled coil; that stretch reads LADFLRCQKEALAEKEHKLEEYKRKLARVSLVRKELRARIQSL.

Belongs to the UPF0400 (RTT103) family. May form a heterodimer with RPRD1B. Associates with the RNA polymerase II subunit POLR2A (via CTD phosphorylated at 'Ser-2' and 'Ser-7' of the heptad repeats).

It is found in the nucleus. In terms of biological role, interacts with phosphorylated C-terminal heptapeptide repeat domain (CTD) of the largest RNA polymerase II subunit POLR2A, and participates in dephosphorylation of the CTD by RPAP2. May act as a negative regulator of cyclin-D1 (CCND1) and cyclin-E (CCNE1) in the cell cycle. In Mus musculus (Mouse), this protein is Regulation of nuclear pre-mRNA domain-containing protein 1A (Rprd1a).